The primary structure comprises 354 residues: Uroporphyrinogen decarboxylase (354 aa).

Residues 27-31 (RQAGR), Asp-77, Tyr-154, Ser-209, and His-327 each bind substrate.

The protein belongs to the uroporphyrinogen decarboxylase family. As to quaternary structure, homodimer.

It localises to the cytoplasm. The catalysed reaction is uroporphyrinogen III + 4 H(+) = coproporphyrinogen III + 4 CO2. Its pathway is porphyrin-containing compound metabolism; protoporphyrin-IX biosynthesis; coproporphyrinogen-III from 5-aminolevulinate: step 4/4. Catalyzes the decarboxylation of four acetate groups of uroporphyrinogen-III to yield coproporphyrinogen-III. In Teredinibacter turnerae (strain ATCC 39867 / T7901), this protein is Uroporphyrinogen decarboxylase.